Consider the following 357-residue polypeptide: Low-salt glycan biosynthesis nucleotidyltransferase Agl11 (357 aa).

Aspartate 108 and aspartate 221 together coordinate Mg(2+).

Belongs to the glucose-1-phosphate thymidylyltransferase family. Mg(2+) serves as cofactor.

Its pathway is protein modification; protein glycosylation. The protein operates within cell surface structure biogenesis; S-layer biogenesis. Its function is as follows. Nucleotidyltransferase involved in N-glycan biosynthetic pathway that takes place under low-salt conditions (1.75 M instead of 3.4 M). Participates in the formation of the tetrasaccharide present at 'Asn-532' of S-layer glycoprotein Csg, consisting of a sulfated hexose, 2 hexoses and rhamnose. Involved in the addition of final rhamnose (sugar 4) of the tetrasaccharide on the dolichol phosphate carrier. This Haloferax volcanii (strain ATCC 29605 / DSM 3757 / JCM 8879 / NBRC 14742 / NCIMB 2012 / VKM B-1768 / DS2) (Halobacterium volcanii) protein is Low-salt glycan biosynthesis nucleotidyltransferase Agl11 (agl11).